The primary structure comprises 259 residues: Troponin T, fast skeletal muscle (259 aa).

Over residues 1–36 the composition is skewed to acidic residues; that stretch reads MSDEETEQVEEQYEEEEEAQEEEVQEEAPEPEEVQE. The tract at residues 1 to 62 is disordered; it reads MSDEETEQVE…EKVDFDDIQK (62 aa). Ser-2 is modified (N-acetylserine). Ser-2 is subject to Phosphoserine. Positions 50–62 are enriched in basic and acidic residues; the sequence is PEGEKVDFDDIQK. Phosphoserine is present on Ser-78. Over residues 101–143 the composition is skewed to basic and acidic residues; the sequence is RAERAEQQRIRAEKERERQNRLAEEKARREEEDAKRRAEDDLK. Residues 101-180 form a disordered region; that stretch reads RAERAEQQRI…TAREMKKKIL (80 aa). A phosphoserine mark is found at Ser-149, Ser-156, and Ser-157. Positions 171–180 are enriched in basic and acidic residues; the sequence is TAREMKKKIL. The residue at position 193 (Ser-193) is a Phosphoserine. Position 209 is a phosphotyrosine (Tyr-209). Positions 235 to 259 are disordered; that stretch reads RIDQAQKHSKKAGATAKGKVGGRWK.

Belongs to the troponin T family.

Troponin T is the tropomyosin-binding subunit of troponin, the thin filament regulatory complex which confers calcium-sensitivity to striated muscle actomyosin ATPase activity. This chain is Troponin T, fast skeletal muscle (Tnnt3), found in Rattus norvegicus (Rat).